Here is a 136-residue protein sequence, read N- to C-terminus: Keratin-associated protein 9-3 (136 aa).

11 repeat units span residues 3-7, 21-25, 31-35, 36-40, 41-45, 46-50, 87-91, 97-101, 107-111, 117-121, and 126-130. Residues 21-130 are 11 X 5 AA repeats of C-C-[AEQVR]-[ALPTV]-[AGHST]; it reads CCQPTCTQSS…ACCCYCCQPS (110 aa).

It belongs to the KRTAP type 9 family. Interacts with hair keratins.

In terms of biological role, in the hair cortex, hair keratin intermediate filaments are embedded in an interfilamentous matrix, consisting of hair keratin-associated proteins (KRTAP), which are essential for the formation of a rigid and resistant hair shaft through their extensive disulfide bond cross-linking with abundant cysteine residues of hair keratins. The matrix proteins include the high-sulfur and high-glycine-tyrosine keratins. This is Keratin-associated protein 9-3 from Mus musculus (Mouse).